The sequence spans 264 residues: 3-methyl-2-oxobutanoate hydroxymethyltransferase (264 aa).

Mg(2+) is bound by residues Asp45 and Asp84. Residues 45–46, Asp84, and Lys112 contribute to the 3-methyl-2-oxobutanoate site; that span reads DS. Glu114 is a Mg(2+) binding site. Catalysis depends on Glu181, which acts as the Proton acceptor.

This sequence belongs to the PanB family. As to quaternary structure, homodecamer; pentamer of dimers. It depends on Mg(2+) as a cofactor.

The protein resides in the cytoplasm. The catalysed reaction is 3-methyl-2-oxobutanoate + (6R)-5,10-methylene-5,6,7,8-tetrahydrofolate + H2O = 2-dehydropantoate + (6S)-5,6,7,8-tetrahydrofolate. The protein operates within cofactor biosynthesis; (R)-pantothenate biosynthesis; (R)-pantoate from 3-methyl-2-oxobutanoate: step 1/2. Functionally, catalyzes the reversible reaction in which hydroxymethyl group from 5,10-methylenetetrahydrofolate is transferred onto alpha-ketoisovalerate to form ketopantoate. The chain is 3-methyl-2-oxobutanoate hydroxymethyltransferase from Escherichia coli (strain 55989 / EAEC).